A 361-amino-acid chain; its full sequence is Single-stranded DNA-binding protein 3 (361 aa).

The residue at position 1 (M1) is an N-acetylmethionine. In terms of domain architecture, LisH spans 16-48 (AREKLALYVYEYLLHVGAQKSAQTFLSEIRWEK). 3 positions are modified to asymmetric dimethylarginine: R128, R134, and R138. Disordered regions lie at residues 140-166 (GNQP…QQGH) and 184-361 (PMGP…TMSV). Residues 223–241 (PNSANSIPYSSSSPGTYVG) show a composition bias toward low complexity. Over residues 245–255 (GGGPPGTPIMP) the composition is skewed to pro residues. Positions 258-269 (ADSTNSSDNIYT) are enriched in polar residues. Positions 288 to 298 (GSDGPMGGMGG) are enriched in gly residues. Low complexity predominate over residues 319–330 (NSPNNISGISNP). Residues S320, S325, and S328 each carry the phosphoserine modification. The residue at position 333 (T333) is a Phosphothreonine. Residues 346-361 (HSFQNDNYSPSMTMSV) are compositionally biased toward polar residues. Residues S354 and S360 each carry the phosphoserine modification.

It is found in the nucleus. Functionally, may be involved in transcription regulation of the alpha 2(I) collagen gene where it binds to the single-stranded polypyrimidine sequences in the promoter region. In Rattus norvegicus (Rat), this protein is Single-stranded DNA-binding protein 3 (Ssbp3).